A 563-amino-acid polypeptide reads, in one-letter code: Arginine--tRNA ligase (563 aa).

Positions 122–132 match the 'HIGH' region motif; it reads PNIAKPISMGH.

It belongs to the class-I aminoacyl-tRNA synthetase family. As to quaternary structure, monomer.

It is found in the cytoplasm. The enzyme catalyses tRNA(Arg) + L-arginine + ATP = L-arginyl-tRNA(Arg) + AMP + diphosphate. The polypeptide is Arginine--tRNA ligase (Enterococcus faecalis (strain ATCC 700802 / V583)).